The sequence spans 177 residues: Large ribosomal subunit protein uL6 (177 aa).

The protein belongs to the universal ribosomal protein uL6 family. As to quaternary structure, part of the 50S ribosomal subunit.

This protein binds to the 23S rRNA, and is important in its secondary structure. It is located near the subunit interface in the base of the L7/L12 stalk, and near the tRNA binding site of the peptidyltransferase center. The sequence is that of Large ribosomal subunit protein uL6 from Salmonella dublin (strain CT_02021853).